The sequence spans 320 residues: Elongation factor Ts (320 aa).

The tract at residues 82-85 is involved in Mg(2+) ion dislocation from EF-Tu; sequence TDFV.

The protein belongs to the EF-Ts family.

It is found in the cytoplasm. In terms of biological role, associates with the EF-Tu.GDP complex and induces the exchange of GDP to GTP. It remains bound to the aminoacyl-tRNA.EF-Tu.GTP complex up to the GTP hydrolysis stage on the ribosome. The sequence is that of Elongation factor Ts from Flavobacterium johnsoniae (strain ATCC 17061 / DSM 2064 / JCM 8514 / BCRC 14874 / CCUG 350202 / NBRC 14942 / NCIMB 11054 / UW101) (Cytophaga johnsonae).